We begin with the raw amino-acid sequence, 470 residues long: Glutamate--tRNA ligase (470 aa).

A 'HIGH' region motif is present at residues 9-19; it reads PSPTGFLHVGG. A 'KMSKS' region motif is present at residues 236–240; the sequence is RLSKR. K239 is a binding site for ATP.

The protein belongs to the class-I aminoacyl-tRNA synthetase family. Glutamate--tRNA ligase type 1 subfamily. In terms of assembly, monomer.

It is found in the cytoplasm. It carries out the reaction tRNA(Glu) + L-glutamate + ATP = L-glutamyl-tRNA(Glu) + AMP + diphosphate. Its function is as follows. Catalyzes the attachment of glutamate to tRNA(Glu) in a two-step reaction: glutamate is first activated by ATP to form Glu-AMP and then transferred to the acceptor end of tRNA(Glu). The chain is Glutamate--tRNA ligase from Legionella pneumophila (strain Paris).